The chain runs to 427 residues: Peptidase B (427 aa).

Mn(2+) is bound by residues lysine 195 and aspartate 200. Lysine 207 is a catalytic residue. Residues aspartate 218, aspartate 277, and glutamate 279 each contribute to the Mn(2+) site. Arginine 281 is an active-site residue.

This sequence belongs to the peptidase M17 family. As to quaternary structure, homohexamer. The cofactor is Mn(2+).

The protein localises to the cytoplasm. The enzyme catalyses Release of an N-terminal amino acid, Xaa, from a peptide or arylamide. Xaa is preferably Glu or Asp but may be other amino acids, including Leu, Met, His, Cys and Gln.. Functionally, probably plays an important role in intracellular peptide degradation. The sequence is that of Peptidase B from Escherichia coli (strain ATCC 8739 / DSM 1576 / NBRC 3972 / NCIMB 8545 / WDCM 00012 / Crooks).